A 509-amino-acid polypeptide reads, in one-letter code: Protein disulfide-isomerase (509 aa).

An N-terminal signal peptide occupies residues 1-19 (MLSRSLLCLALAWVARVGA). In terms of domain architecture, Thioredoxin 1 spans 20–136 (DAPEEEDNVL…IVNWLKKRTG (117 aa)). Residues cysteine 55 and cysteine 58 each act as nucleophile in the active site. Residues cysteine 55 and cysteine 58 are joined by a disulfide bond. Lysine 202 carries the post-translational modification N6-acetyllysine. N6-succinyllysine occurs at positions 224 and 273. 2 positions are modified to phosphoserine: serine 333 and serine 359. The region spanning 335 to 477 (ELTAEKITEF…FKKFLESGGQ (143 aa)) is the Thioredoxin 2 domain. Residues cysteine 399 and cysteine 402 each act as nucleophile in the active site. Cysteine 399 and cysteine 402 are joined by a disulfide. Serine 429 is modified (phosphoserine). Residues 473 to 509 (ESGGQDGAGDDDDVDLEEALEPDMEEDDDQKAVKDEL) form a disordered region. The segment covering 480 to 501 (AGDDDDVDLEEALEPDMEEDDD) has biased composition (acidic residues). Positions 506–509 (KDEL) match the Prevents secretion from ER motif.

This sequence belongs to the protein disulfide isomerase family. In terms of assembly, heterodimer; heterodimerizes with the protein microsomal triglyceride transfer MTTP. Homodimer. Homodimer. Monomers and homotetramers may also occur. Interacts with P4HA2, forming a heterotetramer consisting of 2 alpha subunits (P4HA2) and 2 beta (P4HB), where P4HB plays the role of a structural subunit; this tetramer catalyzes the formation of 4-hydroxyproline in collagen. Also constitutes the structural subunit of the microsomal triacylglycerol transfer protein MTTP in mammalian cells. Stabilizes both enzymes and retain them in the ER without contributing to the catalytic activity. Binds UBQLN1. Interacts with ERO1B. Interacts with ILDR2. Interacts with ERN1/IRE1A (via N-terminus); the interaction is enhanced by phosphorylation of P4HB by FAM20C in response to endoplasmic reticulum stress and results in attenuation of ERN1 activity. Phosphorylation of Ser-359 by FAM20C is induced by endoplasmic reticulum stress and results in a functional switch from oxidoreductase to molecular chaperone. It also promotes interaction with ERN1.

It is found in the endoplasmic reticulum. It localises to the endoplasmic reticulum lumen. The protein localises to the melanosome. The protein resides in the cell membrane. The catalysed reaction is Catalyzes the rearrangement of -S-S- bonds in proteins.. This multifunctional protein catalyzes the formation, breakage and rearrangement of disulfide bonds. At the cell surface, seems to act as a reductase that cleaves disulfide bonds of proteins attached to the cell. May therefore cause structural modifications of exofacial proteins. Inside the cell, seems to form/rearrange disulfide bonds of nascent proteins. At high concentrations and following phosphorylation by FAM20C, functions as a chaperone that inhibits aggregation of misfolded proteins. At low concentrations, facilitates aggregation (anti-chaperone activity). May be involved with other chaperones in the structural modification of the TG precursor in hormone biogenesis. Also acts as a structural subunit of various enzymes such as prolyl 4-hydroxylase and microsomal triacylglycerol transfer protein MTTP. Receptor for LGALS9; the interaction retains P4HB at the cell surface of Th2 T helper cells, increasing disulfide reductase activity at the plasma membrane, altering the plasma membrane redox state and enhancing cell migration. The chain is Protein disulfide-isomerase (P4HB) from Cricetulus griseus (Chinese hamster).